The chain runs to 242 residues: Protein HTATIP2 (242 aa).

Residue Ala-2 is modified to N-acetylalanine. Residues Ala-2–Gly-25 form a required for interaction with elongation factor EEF1A1 region. 12 residues coordinate NADPH: Ser-27, Gly-28, Glu-29, Thr-30, Arg-52, Arg-53, Leu-92, Gly-93, Tyr-143, Lys-147, Leu-170, and Arg-178. Tyr-143 functions as the Proton acceptor in the catalytic mechanism. Lys-147 is a catalytic residue.

In terms of assembly, monomer. Forms homodimers during oxidative stress. Interacts (via N-terminus) with elongation factor EEF1A1 (via middle-region); the interaction is direct and competes with EEF1A1 binding to guanyl-nucleotide exchange factor EEF1B2, thereby inhibiting GDP for GTP exchange and reactivation of EEF1A1. Interacts with nuclear transport receptors XPO4, IPO5/RANBP5, IPO7, IPO9 and KPNB1 as well as GCN1L1/GCN1 and LRPPRC probably through their HEAT repeats. Binds NCOA5/CIA. As to quaternary structure, interacts (via N-terminus) with proteasome subunit PSMD4/s5a. (Microbial infection) Interacts with HIV-1 Tat (via activation domain). In terms of tissue distribution, high levels in liver, lung, skeletal muscle, pancreas and placenta. Moderate levels in heart and kidney. Low levels in brain. Not expressed or low levels in variant small cell lung carcinomas, 33% of hepatocellular carcinomas and neuroblastomas. Levels are reduced in the heart of patients with hypertrophic cardiomyopathy and failing hearts.

Its subcellular location is the cytoplasm. In terms of biological role, represses translation by preventing reactivation of elongation factor eEF1A. May also inhibit nuclear import by competing with nuclear import substrates for binding to a subset of nuclear transport receptors. Has additionally been proposed to act as a redox sensor involved in cellular oxidative stress surveillance. This is Protein HTATIP2 from Homo sapiens (Human).